The following is a 495-amino-acid chain: UDP-glycosyltransferase 73C6 (495 aa).

Residues Ser296, 356–358, 373–381, and 395–398 contribute to the UDP-alpha-D-glucose site; these read SPQ, HCGWNSTLE, and FADQ. The disordered stretch occupies residues 449-475; the sequence is SDDAKERRRRAKELGESAHKAVEEGGS. Residues 450 to 471 are compositionally biased toward basic and acidic residues; sequence DDAKERRRRAKELGESAHKAVE.

Belongs to the UDP-glycosyltransferase family. As to expression, expressed in leaves and flowers, and at a very low level in roots.

In terms of biological role, acts as a UDP-glucose:flavonol-3-O-glycoside-7-O-glucosyltransferase. 6- and 7-hydroxyflavone, but not 3- or 5-hydroxyflavone are accepted as substrates. Possesses low quercetin 3-O-glucosyltransferase, 7-O-glucosyltransferase and 4'-O-glucosyltransferase activities in vitro. The sequence is that of UDP-glycosyltransferase 73C6 (UGT73C6) from Arabidopsis thaliana (Mouse-ear cress).